Here is a 433-residue protein sequence, read N- to C-terminus: MVRLLASEVQQLLHNKFVVVLGDSVHRAVYKDLVLLLQKDCLLTNKQLRTKGELSFEKDQLKMGGELDTLHNRTDYREVREFCSDHHLVRFYFLTRVYSEYMESVLEELQSGNHAPDVIIMNSCLWDVSRYGRNSLSSYKQNLENLFGRMDQVLPKSCLLVWNTAMPLGDKIKAAFLPQKCKGQYPRISVATLKRKVTQANLYSHAEATKHYFDVLDLNFHFRQARKHLQGDGVHWNEHAHRKLSYLLLAHMADAWGVELPQRDSWEPDFEAWESSGQVEERQPQDNLGPQVFAPSPHCPFRPPPLLPSPGLPIRPPPLLGCPLPQPQQMPPFPLYPQVSYFSSDPVFQSDEFYIHSDSPPPTHTGYAFEGDFSFYPQPPVPNFRPPCHQRQAPVVHRGFPRHFARGPYSNPWRDRPRRPPKHSPAGLESRPQ.

The interval 386–433 (PPCHQRQAPVVHRGFPRHFARGPYSNPWRDRPRRPPKHSPAGLESRPQ) is disordered.

The protein belongs to the PC-esterase family.

In Mus musculus (Mouse), this protein is PC-esterase domain-containing protein 1B (Pced1b).